We begin with the raw amino-acid sequence, 236 residues long: Small ribosomal subunit protein uS2c (236 aa).

This sequence belongs to the universal ribosomal protein uS2 family.

Its subcellular location is the plastid. It is found in the chloroplast. The protein is Small ribosomal subunit protein uS2c (rps2) of Gossypium barbadense (Sea Island cotton).